A 298-amino-acid polypeptide reads, in one-letter code: ATP synthase F(1) complex subunit gamma, mitochondrial (298 aa).

The N-terminal 25 residues, Met1–Met25, are a transit peptide targeting the mitochondrion. Lys39 bears the N6-acetyllysine mark. An N6-succinyllysine modification is found at Lys49. Residue Lys55 is modified to N6-acetyllysine. The residue at position 115 (Lys115) is an N6-acetyllysine; alternate. Lys115 is subject to N6-succinyllysine; alternate. Ser146 carries the post-translational modification Phosphoserine. Position 154 is an N6-acetyllysine; alternate (Lys154). N6-succinyllysine; alternate is present on Lys154. The residue at position 197 (Lys197) is an N6-acetyllysine. Residue Lys270 is modified to N6-succinyllysine.

It belongs to the ATPase gamma chain family. As to quaternary structure, component of the ATP synthase complex composed at least of ATP5F1A/subunit alpha, ATP5F1B/subunit beta, ATP5MC1/subunit c (homooctomer), MT-ATP6/subunit a, MT-ATP8/subunit 8, ATP5ME/subunit e, ATP5MF/subunit f, ATP5MG/subunit g, ATP5MK/subunit k, ATP5MJ/subunit j, ATP5F1C/subunit gamma, ATP5F1D/subunit delta, ATP5F1E/subunit epsilon, ATP5PF/subunit F6, ATP5PB/subunit b, ATP5PD/subunit d, ATP5PO/subunit OSCP. ATP synthase complex consists of a soluble F(1) head domain (subunits alpha(3) and beta(3)) - the catalytic core - and a membrane F(0) domain - the membrane proton channel (subunits c, a, 8, e, f, g, k and j). These two domains are linked by a central stalk (subunits gamma, delta, and epsilon) rotating inside the F1 region and a stationary peripheral stalk (subunits F6, b, d, and OSCP). Interacts with FLVCR2; this interaction occurs in the absence of heme and is disrupted upon heme binding.

It is found in the mitochondrion inner membrane. Its function is as follows. Subunit gamma, of the mitochondrial membrane ATP synthase complex (F(1)F(0) ATP synthase or Complex V) that produces ATP from ADP in the presence of a proton gradient across the membrane which is generated by electron transport complexes of the respiratory chain. ATP synthase complex consist of a soluble F(1) head domain - the catalytic core - and a membrane F(1) domain - the membrane proton channel. These two domains are linked by a central stalk rotating inside the F(1) region and a stationary peripheral stalk. During catalysis, ATP synthesis in the catalytic domain of F(1) is coupled via a rotary mechanism of the central stalk subunits to proton translocation. In vivo, can only synthesize ATP although its ATP hydrolase activity can be activated artificially in vitro. With the central stalk subunit delta, is essential for the biogenesis of F(1) catalytic part of the ATP synthase complex namely in the formation of F1 assembly intermediate. The chain is ATP synthase F(1) complex subunit gamma, mitochondrial from Macaca fascicularis (Crab-eating macaque).